The primary structure comprises 129 residues: Large ribosomal subunit protein bL12 (129 aa).

The span at Met95–Gly123 shows a compositional bias: basic and acidic residues. Positions Met95–Lys129 are disordered.

This sequence belongs to the bacterial ribosomal protein bL12 family. In terms of assembly, homodimer. Part of the ribosomal stalk of the 50S ribosomal subunit. Forms a multimeric L10(L12)X complex, where L10 forms an elongated spine to which 2 to 4 L12 dimers bind in a sequential fashion. Binds GTP-bound translation factors.

Forms part of the ribosomal stalk which helps the ribosome interact with GTP-bound translation factors. Is thus essential for accurate translation. This Acaryochloris marina (strain MBIC 11017) protein is Large ribosomal subunit protein bL12.